Reading from the N-terminus, the 534-residue chain is Fimbrial subunit type 2 (534 aa).

The first 32 residues, 1–32, serve as a signal peptide directing secretion; it reads MKYNTSTLGRRAAAAAGVLTLAVLGLAPMAQA. Disordered regions lie at residues 56–76 and 329–376; these read GDGN…GKGA and TYAE…DKDG. Residues 334 to 347 show a composition bias toward pro residues; that stretch reads PPAPETPPANPDNP. The segment covering 361–376 has biased composition (basic and acidic residues); sequence TIKKVDGNDRSGDKDG. Positions 492 to 496 match the LPXTG sorting signal motif; that stretch reads LPLTG. At threonine 495 the chain carries Pentaglycyl murein peptidoglycan amidated threonine. Positions 496-534 are cleaved as a propeptide — removed by sortase; the sequence is GANGMLILTASGAALLMIAVGSVLVARYRERKRNRDLAA.

It localises to the secreted. Its subcellular location is the cell wall. It is found in the fimbrium. Functionally, major fimbrial subunit of A.naeslundii. This Actinomyces naeslundii protein is Fimbrial subunit type 2.